Consider the following 1317-residue polypeptide: MFINSFETKIKKKFSLLYEKLDDEDENEPSSSPSNSTNNFYKACPEDNSSKWSKISFNWVTKLIMKGYFKESLEMNDIYDLPELNKVQTTSKLLDDINFSNGSKYALIKHIYKNFLPKNKYALISNIFITIFIFLSPICLKFLINYISTDNDNEKSILKGILLCCLLCISILGQSISQELFYWFGMKNSFDVRGALTAKIFEKTLKLSNVSKKKYRSGKIMNIMSIDVENISEFFWTYYLDIVSHTLQILILLGLLCYVVGPSGLVGFGVMVIALPINTMLCTKSSNYLEKSLEYSDSRTNLTSELITNIRPFKMYAWENLFINKIEEQRKQELKFLFLRVLFWIFDHMMIETNATLVLVSTFATYSLTGNTMSLDVTFTAMTIFANLKLPLIYLPEDIYKAIGLMPSVKRIQNFLKSSESLKSKENNQNINFNNNNNNNNNNKNNNNNDDNDIIIENCTFQWNEPENNNLFEFNQSEDEEENEEEEEEENEENIKINENFDYKLNDINLIVPKGKLTMICGVVGSGKTSLVCGLIGEIYKLNGSVSGVPNNISFTSQQPFLLSASLRENILFGNEFDIERYKKVIESTALTKDIVNLAGLDLTEIGERGINLSGGQKQRISLARALYANSDCFIFDEPLSAVDPEVASHLFDHCIQGIDFKSILKTKEIKKNVENETDSEELIKNEIEIENEIIDVNNVISDKNDPNLIEKAKLLVKEDKNEGEVEFNVYKKYFSYGTSGVTLFITISLFFIGQAVYKVSDFWLAIWTERSIEGKSDSFYIGYYLLIIGIFVSLLMIRTYSLSRITFGIGKNLHSALLKSVTYASCRFFDTNPSGRILNRFSKDTSDIDIHMLDLLSEVSICFSELTIGLISIVFIIPIIIIPLTLLFIIYYIYQRLYRPSARELNRWESITLSPVFSLLQECYNGLLTIRTYKQESRFIKEMFDNININLGCIFYSFAVHRWISMRLEVMGCIMVFFTSLAAALFTSNNGLAALSVTTALSLNGYLSWGVRRIVELEVKMNSFQRIQSYIEIPKEGNKLISTGTNQVDSDGLKTISNGDLVNWPNKGIIEFKNVEIKYRPNSEPNLKDLSFKVQSSEKIGIVGRTGAGKTTIASSLFRMVECSKGLILIDGIDISKVQLQKLRSSIGIVPQDPFIFTGTIRSNIDPFNEFTDFEIWESIEKVKLKDAINSMPLKLETALQENGDNGFSYGQKQLLCLCRTILKNFKIILMDEATSSIDYHTAQLIKQTIQENFKDCTTLTIAHRLETIIDCNKIAVIDSGQLIEFDTPSNLMNIPNSKFNKLIKSQTDYSNNKIK.

One can recognise an ABC transmembrane type-1 1 domain in the interval 119–404 (NKYALISNIF…LPEDIYKAIG (286 aa)). A run of 5 helical transmembrane segments spans residues 127-147 (IFIT…INYI), 156-176 (SILK…GQSI), 249-269 (ILIL…VGFG), 341-361 (VLFW…VLVS), and 375-395 (LDVT…LIYL). The tract at residues 426–451 (ENNQNINFNNNNNNNNNNKNNNNNDD) is disordered. Positions 427-449 (NNQNINFNNNNNNNNNNKNNNNN) are enriched in low complexity. Positions 490–710 (ENEENIKINE…ISDKNDPNLI (221 aa)) constitute an ABC transporter 1 domain. Residue 522-529 (GVVGSGKT) participates in ATP binding. Helical transmembrane passes span 734–754 (YFSY…FFIG), 778–798 (DSFY…LLMI), 871–891 (LISI…LFII), 969–989 (LEVM…LFTS), and 992–1012 (GLAA…SWGV). The region spanning 744–1027 (LFITISLFFI…LEVKMNSFQR (284 aa)) is the ABC transmembrane type-1 2 domain. The ABC transporter 2 domain occupies 1071–1306 (IEFKNVEIKY…PNSKFNKLIK (236 aa)). Residue 1105–1112 (GRTGAGKT) participates in ATP binding.

It belongs to the ABC transporter superfamily. ABCC family. Conjugate transporter (TC 3.A.1.208) subfamily.

Its subcellular location is the membrane. In Dictyostelium discoideum (Social amoeba), this protein is ABC transporter C family member 14 (abcC14).